Consider the following 376-residue polypeptide: Carbohydrate sulfotransferase 14 (376 aa).

Topologically, residues 1 to 39 (MFPRPLTPLAAPNGAEPLGRALRRAPLGRARAGLGGPPL) are cytoplasmic. A helical; Signal-anchor for type II membrane protein transmembrane segment spans residues 40–60 (LLPSMLMFAVIVASSGLLLMI). Topologically, residues 61 to 376 (ERGILAEMKP…PNVTKEACQQ (316 aa)) are lumenal. Asparagine 110 is a glycosylation site (N-linked (GlcNAc...) asparagine). 3'-phosphoadenylyl sulfate-binding positions include 155–161 (PKVACSN) and 213–221 (REPLERLLS). An N-linked (GlcNAc...) asparagine glycan is attached at asparagine 368.

This sequence belongs to the sulfotransferase 2 family. Widely expressed. Expressed at high level in pituitary gland, placenta, uterus and thyroid.

The protein resides in the golgi apparatus membrane. The enzyme catalyses dermatan + n 3'-phosphoadenylyl sulfate = dermatan 4'-sulfate + n adenosine 3',5'-bisphosphate + n H(+). Functionally, catalyzes the transfer of sulfate to position 4 of the N-acetylgalactosamine (GalNAc) residue of dermatan sulfate. Plays a pivotal role in the formation of 4-0-sulfated IdoA blocks in dermatan sulfate. Transfers sulfate to the C-4 hydroxyl of beta1,4-linked GalNAc that is substituted with an alpha-linked iduronic acid (IdoUA) at the C-3 hydroxyl. Transfers sulfate more efficiently to GalNAc residues in -IdoUA-GalNAc-IdoUA- than in -GlcUA-GalNAc-GlcUA-sequences. Has preference for partially desulfated dermatan sulfate. Addition of sulfate to GalNAc may occur immediately after epimerization of GlcUA to IdoUA. Appears to have an important role in the formation of the cerebellar neural network during postnatal brain development. The chain is Carbohydrate sulfotransferase 14 (CHST14) from Homo sapiens (Human).